The following is a 1615-amino-acid chain: Mediator of RNA polymerase II transcription subunit 23 (1615 aa).

2 disordered regions span residues 40–67 and 1230–1270; these read RQKP…DLPP and SSSS…NASE. Over residues 41-51 the composition is skewed to basic and acidic residues; that stretch reads QKPDESLRDPP. Positions 1230–1241 are enriched in low complexity; sequence SSSSNCSSRSGS.

Belongs to the Mediator complex subunit 23 family. In terms of assembly, component of the Mediator complex.

It is found in the nucleus. In terms of biological role, component of the Mediator complex, a coactivator involved in the regulated transcription of nearly all RNA polymerase II-dependent genes. Mediator functions as a bridge to convey information from gene-specific regulatory proteins to the basal RNA polymerase II transcription machinery. The Mediator complex, having a compact conformation in its free form, is recruited to promoters by direct interactions with regulatory proteins and serves for the assembly of a functional preinitiation complex with RNA polymerase II and the general transcription factors. The protein is Mediator of RNA polymerase II transcription subunit 23 (MED23) of Arabidopsis thaliana (Mouse-ear cress).